The primary structure comprises 155 residues: Small ribosomal subunit protein uS7 (155 aa).

This sequence belongs to the universal ribosomal protein uS7 family. As to quaternary structure, part of the 30S ribosomal subunit. Contacts proteins S9 and S11.

Functionally, one of the primary rRNA binding proteins, it binds directly to 16S rRNA where it nucleates assembly of the head domain of the 30S subunit. Is located at the subunit interface close to the decoding center, probably blocks exit of the E-site tRNA. In Lactococcus lactis subsp. lactis (strain IL1403) (Streptococcus lactis), this protein is Small ribosomal subunit protein uS7.